Here is a 149-residue protein sequence, read N- to C-terminus: Nucleoside diphosphate kinase (149 aa).

6 residues coordinate ATP: Lys-9, Phe-57, Arg-85, Thr-91, Arg-102, and Asn-112. The active-site Pros-phosphohistidine intermediate is His-115.

The protein belongs to the NDK family. The cofactor is Mg(2+).

It localises to the cytoplasm. It catalyses the reaction a 2'-deoxyribonucleoside 5'-diphosphate + ATP = a 2'-deoxyribonucleoside 5'-triphosphate + ADP. The catalysed reaction is a ribonucleoside 5'-diphosphate + ATP = a ribonucleoside 5'-triphosphate + ADP. Major role in the synthesis of nucleoside triphosphates other than ATP. The ATP gamma phosphate is transferred to the NDP beta phosphate via a ping-pong mechanism, using a phosphorylated active-site intermediate. This is Nucleoside diphosphate kinase from Methanosarcina acetivorans (strain ATCC 35395 / DSM 2834 / JCM 12185 / C2A).